Reading from the N-terminus, the 294-residue chain is UDP-3-O-acyl-N-acetylglucosamine deacetylase (294 aa).

Positions 75, 232, and 236 each coordinate Zn(2+). The Proton donor role is filled by His259.

It belongs to the LpxC family. Requires Zn(2+) as cofactor.

The catalysed reaction is a UDP-3-O-[(3R)-3-hydroxyacyl]-N-acetyl-alpha-D-glucosamine + H2O = a UDP-3-O-[(3R)-3-hydroxyacyl]-alpha-D-glucosamine + acetate. The protein operates within glycolipid biosynthesis; lipid IV(A) biosynthesis; lipid IV(A) from (3R)-3-hydroxytetradecanoyl-[acyl-carrier-protein] and UDP-N-acetyl-alpha-D-glucosamine: step 2/6. Catalyzes the hydrolysis of UDP-3-O-myristoyl-N-acetylglucosamine to form UDP-3-O-myristoylglucosamine and acetate, the committed step in lipid A biosynthesis. This Sulfurovum sp. (strain NBC37-1) protein is UDP-3-O-acyl-N-acetylglucosamine deacetylase.